A 379-amino-acid polypeptide reads, in one-letter code: 3-isopropylmalate dehydrogenase 1 (379 aa).

Substrate is bound by residues arginine 101, arginine 111, arginine 139, and aspartate 230. Positions 230, 254, and 258 each coordinate Mg(2+). Residue glycine 293–asparagine 305 coordinates NAD(+).

It belongs to the isocitrate and isopropylmalate dehydrogenases family. LeuB type 1 subfamily. Homodimer. It depends on Mg(2+) as a cofactor. Requires Mn(2+) as cofactor.

It is found in the cytoplasm. The enzyme catalyses (2R,3S)-3-isopropylmalate + NAD(+) = 4-methyl-2-oxopentanoate + CO2 + NADH. It participates in amino-acid biosynthesis; L-leucine biosynthesis; L-leucine from 3-methyl-2-oxobutanoate: step 3/4. In terms of biological role, catalyzes the oxidation of 3-carboxy-2-hydroxy-4-methylpentanoate (3-isopropylmalate) to 3-carboxy-4-methyl-2-oxopentanoate. The product decarboxylates to 4-methyl-2 oxopentanoate. This Bradyrhizobium diazoefficiens (strain JCM 10833 / BCRC 13528 / IAM 13628 / NBRC 14792 / USDA 110) protein is 3-isopropylmalate dehydrogenase 1.